We begin with the raw amino-acid sequence, 359 residues long: Peptide chain release factor 1 (359 aa).

Glutamine 238 carries the N5-methylglutamine modification.

It belongs to the prokaryotic/mitochondrial release factor family. Methylated by PrmC. Methylation increases the termination efficiency of RF1.

Its subcellular location is the cytoplasm. In terms of biological role, peptide chain release factor 1 directs the termination of translation in response to the peptide chain termination codons UAG and UAA. The polypeptide is Peptide chain release factor 1 (Mycoplasmopsis pulmonis (strain UAB CTIP) (Mycoplasma pulmonis)).